The following is a 414-amino-acid chain: F-box protein At3g47030 (414 aa).

Positions 1–24 (MSGMLGLSAVMGKRPKQQVTARPR) are disordered. Residues 28 to 77 (IEKPEEIPDDLLIDVFSRLSIEDVARCRCLSRFWSSILRRRYFTELFHKM) form the F-box domain.

The polypeptide is F-box protein At3g47030 (Arabidopsis thaliana (Mouse-ear cress)).